The sequence spans 652 residues: MVFGMNLGNRRKATRVPDLSRYDYHYNGSGGNSVNQGDNYLKSHELSADAAFAASARAGSLVNYPERGYTNISRANSLRMGHPGQQQQQSSYIPRSYSFTARGAYAPRTGNVGNRRSVSAIPRTGTASSRGVGSRTGSMTGSVARVGSRTGSFAGGGNGSIIIKTQEVKDMMGRTQSITTQTIRRINGMEYVETTTQTAGLVEDPQFHFQQFAENDEFPISDELSATPPAAPLSESQPRTNQRLANFNSNAINNSAANNIRSDSEEEGEEHFTDASDVVEESGAFAEDDQDHFLAKVNKVDVDNNSKSYTSRKPLVQKQGVQQQQEVQHQGISQVQNTEAKSVGRKSTMSKRMTLRDTPNAQLEPEKDTTDQATPDNNATKRKSIFKSKKRNEAVAVPTVPTSDQKTLSQEEMYAIALEIAQQKYGHPTKTVSHSTDNGSRNEMTPILEDADVEQPHVLPTTLHLPTREEQIQHEQLQQPTAAIPTNEKSRHPKKKVKSILDRVVQFSQENSGNQPPKQHRGKQYSQQPPDVAPSNGTTDNFDTNASGHNINHNNNNHNNNNNTSSSSSLRHESGANPVVVTEDTTVLAASTAATPVDVNEPGNPDHVIPASSPSIDNTPRINEKTKSKKKNEKGSFFKRLFKSNKTHINTK.

Disordered regions lie at residues 123–151 (RTGT…SRTG), 304–406 (NNSK…SDQK), 470–576 (EQIQ…ESGA), and 594–652 (ATPV…INTK). A compositionally biased stretch (polar residues) spans 125 to 141 (GTASSRGVGSRTGSMTG). The segment covering 316–336 (VQKQGVQQQQEVQHQGISQVQ) has biased composition (low complexity). Residues 337 to 361 (NTEAKSVGRKSTMSKRMTLRDTPNA) show a composition bias toward polar residues. A compositionally biased stretch (basic residues) spans 380–390 (TKRKSIFKSKK). 2 stretches are compositionally biased toward polar residues: residues 506–517 (QFSQENSGNQPP) and 524–544 (QYSQ…NFDT). Low complexity predominate over residues 545–569 (NASGHNINHNNNNHNNNNNTSSSSS). The segment covering 612-621 (SSPSIDNTPR) has biased composition (polar residues). Basic residues predominate over residues 640–652 (RLFKSNKTHINTK).

The protein resides in the cell membrane. Its function is as follows. May be involved in the control of meiotic sister-chromatid recombination. In Kluyveromyces lactis (strain ATCC 8585 / CBS 2359 / DSM 70799 / NBRC 1267 / NRRL Y-1140 / WM37) (Yeast), this protein is Meiotic sister-chromatid recombination protein 3 (MSC3).